A 230-amino-acid polypeptide reads, in one-letter code: UPF0173 metal-dependent hydrolase OEOE_1287 (230 aa).

Belongs to the UPF0173 family.

The polypeptide is UPF0173 metal-dependent hydrolase OEOE_1287 (Oenococcus oeni (strain ATCC BAA-331 / PSU-1)).